Here is a 265-residue protein sequence, read N- to C-terminus: Pyrroline-5-carboxylate reductase (265 aa).

This sequence belongs to the pyrroline-5-carboxylate reductase family.

Its subcellular location is the cytoplasm. The enzyme catalyses L-proline + NADP(+) = (S)-1-pyrroline-5-carboxylate + NADPH + 2 H(+). The catalysed reaction is L-proline + NAD(+) = (S)-1-pyrroline-5-carboxylate + NADH + 2 H(+). The protein operates within amino-acid biosynthesis; L-proline biosynthesis; L-proline from L-glutamate 5-semialdehyde: step 1/1. In terms of biological role, catalyzes the reduction of 1-pyrroline-5-carboxylate (PCA) to L-proline. The chain is Pyrroline-5-carboxylate reductase from Aquifex aeolicus (strain VF5).